The following is a 736-amino-acid chain: RNA-binding protein RMD9-like, mitochondrial (736 aa).

Disordered regions lie at residues 1–28 (MFRF…KTNS), 124–148 (PRRS…HPNT), and 566–618 (NRGI…GTPV). The N-terminal 79 residues, 1–79 (MFRFAQPANV…HFKNQFSSRN (79 aa)), are a transit peptide targeting the mitochondrion. Over residues 125–140 (RRSNMRNNGNNNMNNG) the composition is skewed to low complexity. Residues 566 to 578 (NRGISSSSPMSAV) are compositionally biased toward polar residues. A compositionally biased stretch (low complexity) spans 579 to 596 (NSLAPSTTNTPSPSLSPI). Positions 602-613 (LSSARNTPNKIW) are enriched in polar residues.

Belongs to the RMD9 family. As to quaternary structure, monomer. Phosphorylated. Phosphorylation promotes binding to RNA.

It is found in the mitochondrion inner membrane. May be involved in the processing or stability of mitochondrial mRNAs. The chain is RNA-binding protein RMD9-like, mitochondrial from Candida glabrata (strain ATCC 2001 / BCRC 20586 / JCM 3761 / NBRC 0622 / NRRL Y-65 / CBS 138) (Yeast).